The sequence spans 851 residues: MRSLLVFRKIPSRIRLRNLRNNKPFCSQSQFPKESENPSQEQRLLVYGSTSEENPVTSKVSLLSAKPEQKDDASVIDVLLNRRNNPEAALRFYNWARPWRGSFEDGDVFWVLIHILVSSPETYGRASDLLIRYVSTSNPTPMASVLVSKLVDSAKSFGFEVNSRAFNYLLNAYSKDRQTDHAVDIVNQMLELDVIPFFPYVNRTLSALVQRNSLTEAKELYSRMVAIGVDGDNVTTQLLMRASLREEKPAEALEVLSRAIERGAEPDSLLYSLAVQACCKTLDLAMANSLLREMKEKKLCVPSQETYTSVILASVKQGNMDDAIRLKDEMLSDGISMNVVAATSLITGHCKNNDLVSALVLFDKMEKEGPSPNSVTFSVLIEWFRKNGEMEKALEFYKKMEVLGLTPSVFHVHTIIQGWLKGQKHEEALKLFDESFETGLANVFVCNTILSWLCKQGKTDEATELLSKMESRGIGPNVVSYNNVMLGHCRQKNMDLARIVFSNILEKGLKPNNYTYSILIDGCFRNHDEQNALEVVNHMTSSNIEVNGVVYQTIINGLCKVGQTSKARELLANMIEEKRLCVSCMSYNSIIDGFFKEGEMDSAVAAYEEMCGNGISPNVITYTSLMNGLCKNNRMDQALEMRDEMKNKGVKLDIPAYGALIDGFCKRSNMESASALFSELLEEGLNPSQPIYNSLISGFRNLGNMVAALDLYKKMLKDGLRCDLGTYTTLIDGLLKDGNLILASELYTEMQAVGLVPDEIIYTVIVNGLSKKGQFVKVVKMFEEMKKNNVTPNVLIYNAVIAGHYREGNLDEAFRLHDEMLDKGILPDGATFDILVSGQVGNLQPVRAASL.

The N-terminal 26 residues, 1-26, are a transit peptide targeting the mitochondrion; the sequence is MRSLLVFRKIPSRIRLRNLRNNKPFC. PPR repeat units lie at residues 162 to 196, 197 to 231, 232 to 266, 267 to 301, 303 to 337, 338 to 372, 373 to 407, 408 to 438, 442 to 476, 477 to 511, 512 to 546, 547 to 577, 583 to 617, 618 to 652, 653 to 687, 688 to 722, 723 to 757, 758 to 792, and 793 to 827; these read NSRAFNYLLNAYSKDRQTDHAVDIVNQMLELDVIP, FFPYVNRTLSALVQRNSLTEAKELYSRMVAIGVDG, DNVTTQLLMRASLREEKPAEALEVLSRAIERGAEP, DSLLYSLAVQACCKTLDLAMANSLLREMKEKKLCV, SQETYTSVILASVKQGNMDDAIRLKDEMLSDGISM, NVVAATSLITGHCKNNDLVSALVLFDKMEKEGPSP, NSVTFSVLIEWFRKNGEMEKALEFYKKMEVLGLTP, SVFHVHTIIQGWLKGQKHEEALKLFDESFET, NVFVCNTILSWLCKQGKTDEATELLSKMESRGIGP, NVVSYNNVMLGHCRQKNMDLARIVFSNILEKGLKP, NNYTYSILIDGCFRNHDEQNALEVVNHMTSSNIEV, NGVVYQTIINGLCKVGQTSKARELLANMIEE, SCMSYNSIIDGFFKEGEMDSAVAAYEEMCGNGISP, NVITYTSLMNGLCKNNRMDQALEMRDEMKNKGVKL, DIPAYGALIDGFCKRSNMESASALFSELLEEGLNP, SQPIYNSLISGFRNLGNMVAALDLYKKMLKDGLRC, DLGTYTTLIDGLLKDGNLILASELYTEMQAVGLVP, DEIIYTVIVNGLSKKGQFVKVVKMFEEMKKNNVTP, and NVLIYNAVIAGHYREGNLDEAFRLHDEMLDKGILP.

It belongs to the PPR family. P subfamily.

It localises to the mitochondrion. This chain is Pentatricopeptide repeat-containing protein At3g54980, mitochondrial, found in Arabidopsis thaliana (Mouse-ear cress).